Consider the following 338-residue polypeptide: Isopenicillin N synthase (338 aa).

Isopenicillin N contacts are provided by Arg-89, Tyr-93, Ser-185, and Tyr-191. Positions 89, 93, 185, 191, 216, and 218 each coordinate N-[(5S)-5-amino-5-carboxypentanoyl]-L-cysteinyl-D-valine. The 109-residue stretch at 182 to 290 folds into the Fe2OG dioxygenase domain; the sequence is TLSSVVLIRY…RQSLPFFVNL (109 aa). Positions 216, 218, and 272 each coordinate Fe(2+). Arg-281 lines the 2-oxoglutarate pocket. Ser-283 contributes to the isopenicillin N binding site. Ser-283 provides a ligand contact to N-[(5S)-5-amino-5-carboxypentanoyl]-L-cysteinyl-D-valine.

Belongs to the iron/ascorbate-dependent oxidoreductase family. Monomer. The cofactor is Fe(2+).

The protein localises to the cytoplasm. It localises to the cytosol. The catalysed reaction is N-[(5S)-5-amino-5-carboxypentanoyl]-L-cysteinyl-D-valine + O2 = isopenicillin N + 2 H2O. Its pathway is antibiotic biosynthesis; penicillin G biosynthesis; penicillin G from L-alpha-aminoadipate and L-cysteine and L-valine: step 2/3. In terms of biological role, isopenicillin N synthase; part of the gene cluster that mediates the biosynthesis of penicillin, the world's most important antibiotic. IpnA catalyzes the cyclization of the tripeptide N-[(5S)-5-amino-5-carboxypentanoyl]-L-cysteinyl-D-valine (LLD-ACV or ACV) to form isopenicillin N (IPN) that contains the beta-lactam nucleus. The penicillin biosynthesis occurs via 3 enzymatic steps, the first corresponding to the production of the tripeptide N-[(5S)-5-amino-5-carboxypentanoyl]-L-cysteinyl-D-valine (LLD-ACV or ACV) by the NRPS pcbAB. The tripeptide ACV is then cyclized to isopenicillin N (IPN) by the isopenicillin N synthase pcbC that forms the beta-lactam nucleus. Finally, the alpha-aminoadipyl side chain is exchanged for phenylacetic acid by the isopenicillin N acyltransferase penDE to yield penicillin in the peroxisomal matrix. This Hapsidospora chrysogena (Acremonium chrysogenum) protein is Isopenicillin N synthase (PCBC).